The primary structure comprises 428 residues: 5-methylthioadenosine/S-adenosylhomocysteine deaminase (428 aa).

Zn(2+) contacts are provided by H65 and H67. 3 residues coordinate substrate: E94, R158, and H184. H211 is a Zn(2+) binding site. Substrate-binding residues include E214 and D299. Zn(2+) is bound at residue D299.

Belongs to the metallo-dependent hydrolases superfamily. MTA/SAH deaminase family. Zn(2+) serves as cofactor.

The enzyme catalyses S-adenosyl-L-homocysteine + H2O + H(+) = S-inosyl-L-homocysteine + NH4(+). The catalysed reaction is S-methyl-5'-thioadenosine + H2O + H(+) = S-methyl-5'-thioinosine + NH4(+). Functionally, catalyzes the deamination of 5-methylthioadenosine and S-adenosyl-L-homocysteine into 5-methylthioinosine and S-inosyl-L-homocysteine, respectively. Is also able to deaminate adenosine. This Moorella thermoacetica (strain ATCC 39073 / JCM 9320) protein is 5-methylthioadenosine/S-adenosylhomocysteine deaminase.